A 242-amino-acid chain; its full sequence is uncharacterized protein (242 aa).

3 helical membrane passes run 75–95 (YAIFHIFLPFILTLLLYHNFY), 116–136 (IVLIFTYVMTVIIVYFSFSLI), and 176–196 (IQGLAHIILSLLLFILGLEVI). A disordered region spans residues 204 to 242 (DVEMSSMRGQAITTEPASDNTMAEGTDCNTSKDVESGSS). Polar residues predominate over residues 210-232 (MRGQAITTEPASDNTMAEGTDCN). Over residues 233-242 (TSKDVESGSS) the composition is skewed to basic and acidic residues.

The protein localises to the cytoplasm. The protein resides in the membrane. This is an uncharacterized protein from Schizosaccharomyces pombe (strain 972 / ATCC 24843) (Fission yeast).